We begin with the raw amino-acid sequence, 1755 residues long: MGVSGSKGQKLFVSVLQRLLSERGLHVKESSAIEFYQFLIKVSPWFPEEGGLNLQDWKRVGREMKRYAAEHGTDSIPKQAYPIWLQLREILTEQSDLVLLSAEAKSVTEEELEEGLTGLLSTSSQEKTYGTRGTAYAEIDTEVDKLSEHIYDEPYEEKEKADKNEEKDHVRKIKKVVQRKENSEGKRKEKDSKAFLATDWNDDDLSPEDWDDLEEQAAHYHDDDELILPVKRKVVKKKPQALRRKPLPPVGFAGAMAEAREKGDLTFTFPVVFMGESDEDDTPVWEPLPLKTLKELQSAVRTMGPSAPYTLQVVDMVASQWLTPSDWHQTARATLSPGDYVLWRTEYEEKSKEMVQKAAGKRKGKVSLDMLLGTGQFLSPSSQIKLSKDVLKDVTTNAVLAWRAIPPPGVKKTVLAGLKQGNEESYETFISRLEEAVYRMMPRGEGSDILIKQLAWENANSLCQDLIRPIRKTGTIQDYIRACLDASPAVVQGMAYAAAMRGQKYSTFVKQTYGGGKGGQGAEGPVCFSCGKTGHIRKDCKDEKGSKRAPPGLCPRCKKGYHWKSECKSKFDKDGNPLPPLETNAENSKNLVKGQSPSPAQKGDGVKGSGLNPEAPPFTIHDLPRGTPGSAGLDLSSQKDLILSLEDGVSLVPTLVKGTLPEGTTGLIIGRSSNYKKGLEVLPGVIDSDFQGEIKVMVKAAKNAVIIHKGERIAQLLLLPYLKLPNPVIKEERGSEGFGSTSHVHWVQEISDSRPMLHIYLNGRRFLGLLDTGADKTCIAGRDWPANWPIHQTESSLQGLGMACGVARSSQPLRWQHEDKSGIIHPFVIPTLPFTLWGRDIMKDIKVRLMTDSPDDSQDLMIGAIESNLFADQISWKSDQPVWLNQWPLKQEKLQALQQLVTEQLQLGHLEESNSPWNTPVFVIKKKSGKWRLLQDLRAVNATMHDMGALQPGLPSPVAVPKGWEIIIIDLQDCFFNIKLHPEDCKRFAFSVPSPNFKRPYQRFQWKVLPQGMKNSPTLCQKFVDKAILTVRDKYQDSYIVHYMDDILLAHPSRSIVDEILTSMIQALNKHGLVVSTEKIQKYDNLKYLGTHIQGDSVSYQKLQIRTDKLRTLNDFQKLLGNINWIRPFLKLTTGELKPLFEILNGDSNPISTRKLTPEACKALQLMNERLSTARVKRLDLSQPWSLCILKTEYTPTACLWQDGVVEWIHLPHISPKVITPYDIFCTQLIIKGRHRSKELFSKDPDYIVVPYTKVQFDLLLQEKEDWPISLLGFLGEVHFHLPKDPLLTFTLQTAIIFPHMTSTTPLEKGIVIFTDGSANGRSVTYIQGREPIIKENTQNTAQQAEIVAVITAFEEVSQPFNLYTDSKYVTGLFPEIETATLSPRTKIYTELKHLQRLIHKRQEKFYIGHIRGHTGLPGPLAQGNAYADSLTRILTALESAQESHALHHQNAAALRFQFHITREQAREIVKLCPNCPDWGHAPQLGVNPRGLKPRVLWQMDVTHVSEFGKLKYVHVTVDTYSHFTFATARTGEATKDVLQHLAQSFAYMGIPQKIKTDNAPAYVSRSIQEFLARWKISHVTGIPYNPQGQAIVERTHQNIKAQLNKLQKAGKYYTPHHLLAHALFVLNHVNMDNQGHTAAERHWGPISADPKPMVMWKDLLTGSWKGPDVLITAGRGYACVFPQDAETPIWVPDRFIRPFTERKEATPTPGTAEKTPPRDEKDQQESPKNESSPHQREDGLATSAGVDLRSGGGP.

A lipid anchor (N-myristoyl glycine; by host) is attached at Gly-2. Composition is skewed to basic and acidic residues over residues 151 to 169 and 178 to 191; these read YDEPYEEKEKADKNEEKDH and QRKENSEGKRKEKD. A disordered region spans residues 151-191; it reads YDEPYEEKEKADKNEEKDHVRKIKKVVQRKENSEGKRKEKD. The short motif at 305-308 is the PTAP/PSAP motif element; sequence PSAP. 2 CCHC-type zinc fingers span residues 525-542 and 552-569; these read PVCFSCGKTGHIRKDCKD and GLCPRCKKGYHWKSECKS. Residues 572 to 631 are disordered; sequence DKDGNPLPPLETNAENSKNLVKGQSPSPAQKGDGVKGSGLNPEAPPFTIHDLPRGTPGSA. Over residues 584–599 the composition is skewed to polar residues; that stretch reads NAENSKNLVKGQSPSP. One can recognise a Peptidase A2 domain in the interval 766 to 841; it reads FLGLLDTGAD…LPFTLWGRDI (76 aa). Asp-771 serves as the catalytic Protease; shared with dimeric partner. Residues 905–1093 form the Reverse transcriptase domain; it reads LQLGHLEESN…DNLKYLGTHI (189 aa). Mg(2+) is bound by residues Asp-970, Asp-1045, Asp-1046, Asp-1316, Glu-1346, Asp-1366, and Asp-1429. Positions 1307–1437 constitute an RNase H type-1 domain; that stretch reads LEKGIVIFTD…ADSLTRILTA (131 aa). Residues 1436–1477 form an Integrase-type zinc finger; sequence TALESAQESHALHHQNAAALRFQFHITREQAREIVKLCPNCP. The Zn(2+) site is built by His-1445, His-1449, Cys-1473, and Cys-1476. Residues 1490 to 1647 enclose the Integrase catalytic domain; the sequence is RGLKPRVLWQ…TAAERHWGPI (158 aa). Residues Asp-1501, Asp-1558, and Glu-1594 each coordinate Mg(2+). The segment at residues 1653–1702 is a DNA-binding region (integrase-type); sequence PMVMWKDLLTGSWKGPDVLITAGRGYACVFPQDAETPIWVPDRFIRPFTE. The tract at residues 1699-1755 is disordered; it reads PFTERKEATPTPGTAEKTPPRDEKDQQESPKNESSPHQREDGLATSAGVDLRSGGGP. A compositionally biased stretch (basic and acidic residues) spans 1716–1740; sequence TPPRDEKDQQESPKNESSPHQREDG.

The protein belongs to the retroviral Pol polyprotein family. As to quaternary structure, homodimer; when myristoylated. Homodimer. In terms of assembly, homooctamer. As to quaternary structure, homotrimer. Mg(2+) serves as cofactor. In terms of processing, specific enzymatic cleavages in vivo yield mature proteins. Released by autocatalytic processing. Post-translationally, myristoylated. Myristoylation of the matrix (MA) domain mediates the transport and binding of Gag polyproteins to the host plasma membrane and is required for the assembly of viral particles.

The protein resides in the virion. The catalysed reaction is DNA(n) + a 2'-deoxyribonucleoside 5'-triphosphate = DNA(n+1) + diphosphate. The enzyme catalyses Endonucleolytic cleavage to 5'-phosphomonoester.. It carries out the reaction dUTP + H2O = dUMP + diphosphate + H(+). With respect to regulation, inhibited by pepstatin A. Functionally, matrix protein. Nucleocapsid protein p14: Binds strongly to viral nucleic acids and promote their aggregation. Also destabilizes the nucleic acids duplexes via highly structured zinc-binding motifs. In terms of biological role, capsid protein. Its function is as follows. NC-dUTPase has dUTPase activity, thereby preventing incorporation of uracil into DNA. Functionally, the aspartyl protease mediates proteolytic cleavages of Gag and Gag-Pol polyproteins during or shortly after the release of the virion from the plasma membrane. Cleavages take place as an ordered, step-wise cascade to yield mature proteins. This process is called maturation. Displays maximal activity during the budding process just prior to particle release from the cell. RT is a multifunctional enzyme that converts the viral dimeric RNA genome into dsDNA in the cytoplasm, shortly after virus entry into the cell. This enzyme displays a DNA polymerase activity that can copy either DNA or RNA templates, and a ribonuclease H (RNase H) activity that cleaves the RNA strand of RNA-DNA heteroduplexes in a partially processive 3' to 5' endonucleasic mode. Conversion of viral genomic RNA into dsDNA requires many steps. A tRNA binds to the primer-binding site (PBS) situated at the 5' end of the viral RNA. RT uses the 3' end of the tRNA primer to perfom a short round of RNA-dependent minus-strand DNA synthesis. The reading proceeds through the U5 region and ends after the repeated (R) region which is present at both ends of viral RNA. The portion of the RNA-DNA heteroduplex is digested by the RNase H, resulting in a ssDNA product attached to the tRNA primer. This ssDNA/tRNA hybridizes with the identical R region situated at the 3' end of viral RNA. This template exchange, known as minus-strand DNA strong stop transfer, can be either intra- or intermolecular. RT uses the 3' end of this newly synthesized short ssDNA to perfom the RNA-dependent minus-strand DNA synthesis of the whole template. RNase H digests the RNA template except for a polypurine tract (PPT) situated at the 5' end of the genome. It is not clear if both polymerase and RNase H activities are simultaneous. RNase H probably can proceed both in a polymerase-dependent (RNA cut into small fragments by the same RT performing DNA synthesis) and a polymerase-independent mode (cleavage of remaining RNA fragments by free RTs). Secondly, RT performs DNA-directed plus-strand DNA synthesis using the PPT that has not been removed by RNase H as primers. PPT and tRNA primers are then removed by RNase H. The 3' and 5' ssDNA PBS regions hybridize to form a circular dsDNA intermediate. Strand displacement synthesis by RT to the PBS and PPT ends produces a blunt ended, linear dsDNA copy of the viral genome that includes long terminal repeats (LTRs) at both ends. In terms of biological role, catalyzes viral DNA integration into the host chromosome, by performing a series of DNA cutting and joining reactions. This Mus musculus (Mouse) protein is Gag-Pro-Pol polyprotein (gag-pro-pol).